The sequence spans 183 residues: Ribosome maturation factor RimM (183 aa).

The 80-residue stretch at 104 to 183 (EGDYYWKDLM…TIEVDWDPGF (80 aa)) folds into the PRC barrel domain.

Belongs to the RimM family. Binds ribosomal protein uS19.

The protein resides in the cytoplasm. In terms of biological role, an accessory protein needed during the final step in the assembly of 30S ribosomal subunit, possibly for assembly of the head region. Essential for efficient processing of 16S rRNA. May be needed both before and after RbfA during the maturation of 16S rRNA. It has affinity for free ribosomal 30S subunits but not for 70S ribosomes. This chain is Ribosome maturation factor RimM, found in Salmonella choleraesuis (strain SC-B67).